Reading from the N-terminus, the 637-residue chain is MSIATATFAFSLFATIAFAVPPETPRIELQAERGLGDKSYAPWQVDCPSNVTWIRNATTGLGSGERAYIEAREKLVQPVIEQMMAARGLETPPRTPNIGVALSGGGYRAMLTGLGGIMGMMNESTEASESETGGWLDGVSYWAGLSGGSWATGTFMSNGGQLPTNLLENLWNIDSNLVFPDDDKLSFYTELYTETNAKSDLGFPIQITDVWGLAIGSHVLPERYQLSNTPNLTFSSLPSVVSALGNASLPMPIIIAADRKRREAGELVIAENATVWEFTPYEFGSWAFGSQYKSPGAFTPIEYLGTSVDDGSPNGTCWKGFDQLSFVMGTSATLFNGAFLELNGTDSGLLTNLITAFLADLGEDQADISRIPNTFSNYNSGENPIYNLTYITLVDAGETNQNIPLEPLLVPTRDVDAIVAFDSSYDTDYIWPNGTALRTTYERAKVLAEHENTRVLMPEVPSMNGFVNGGYNSRPTFFGCNDTTTPLIIYVPSYPWSFAANTSTYQLSYENDEANEMLLNGMRSLTLNHSVPTWPTCFACALTDRSFMYTSENRSTTCQKCFDTWCWAGDDNTTEPATYEPVINSVPPWLVANNLSIGVADAPASNESTAGTASSGAAKADVSMGMVALAAGLGLML.

A signal peptide spans 1–19 (MSIATATFAFSLFATIAFA). One can recognise a PLA2c domain in the interval 46–572 (DCPSNVTWIR…DTWCWAGDDN (527 aa)). 17 N-linked (GlcNAc...) asparagine glycosylation sites follow: asparagine 50, asparagine 56, asparagine 122, asparagine 231, asparagine 246, asparagine 272, asparagine 314, asparagine 343, asparagine 387, asparagine 433, asparagine 481, asparagine 501, asparagine 528, asparagine 553, asparagine 572, asparagine 594, and asparagine 606.

This sequence belongs to the lysophospholipase family. Post-translationally, N-glycosylated.

The protein resides in the secreted. Its subcellular location is the cell membrane. It carries out the reaction a 1-acyl-sn-glycero-3-phosphocholine + H2O = sn-glycerol 3-phosphocholine + a fatty acid + H(+). Its activity is regulated as follows. Inhibited by Fe(3+) ion. Functionally, exhibits phospholipase B (PLB), lysophospholipase (LPL) and lysophospholipase/transacylase (LPTA) activities. The protein is Phospholipase B (PLB1) of Cryptococcus neoformans var. grubii serotype A (strain H99 / ATCC 208821 / CBS 10515 / FGSC 9487) (Filobasidiella neoformans var. grubii).